A 463-amino-acid chain; its full sequence is Probable cysteine protease RD21B (463 aa).

An N-terminal signal peptide occupies residues 1 to 21 (MGFLKLSPMILLLAMIGVSYA). Positions 22-137 (MDMSIISYDE…DRYQARVGDA (116 aa)) are cleaved as a propeptide — activation peptide. N92 is a glycosylation site (N-linked (GlcNAc...) asparagine). Disulfide bonds link C159–C201, C193–C234, C292–C343, C376–C388, and C382–C403. C162 is a catalytic residue. Active-site residues include H298 and N318. Positions 354-463 (KKGQNPPNPG…FWAKSRKHIA (110 aa)) are cleaved as a propeptide — removed in mature form. The N-linked (GlcNAc...) asparagine glycan is linked to N415.

This sequence belongs to the peptidase C1 family. Interacts with PRN2. Interacts with WSCP.

Functionally, probable thiol protease. This chain is Probable cysteine protease RD21B, found in Arabidopsis thaliana (Mouse-ear cress).